The following is a 512-amino-acid chain: Delta(14)-sterol reductase (512 aa).

The next 8 helical transmembrane spans lie at 27–47 (IGASLISFGLPIACYAFGFLC), 100–120 (AVLGVFFWYGLSLLLWVLLPA), 140–160 (ACLSAVTIFVACAAGTIVRGP), 172–192 (YIQLLTVNIIIAYALAIYVYL), 242–262 (SFMELRPGMIGWVLLDLAFAA), 278–298 (WTPLLLGIHVLTIHPVIVIIS), 324–344 (FGFMLSFGDLVWVPFIYSIQA), and 353–373 (ALGPLYVALILTIQATGYYIF). Residues Lys380, Arg384, Leu407, Trp412, and 419–420 (NY) contribute to the NADP(+) site. A run of 2 helical transmembrane segments spans residues 418–438 (INYLGDWLMSWSYCLPTLAAG) and 458–478 (MKGAGIPITYFYMLYFAILLI). Residues Asp484, 488–492 (CRRKY), and Tyr499 contribute to the NADP(+) site.

The protein belongs to the ERG4/ERG24 family.

The protein resides in the membrane. The enzyme catalyses 4,4-dimethyl-5alpha-cholesta-8,24-dien-3beta-ol + NADP(+) = 4,4-dimethyl-5alpha-cholesta-8,14,24-trien-3beta-ol + NADPH + H(+). Its pathway is steroid biosynthesis; zymosterol biosynthesis; zymosterol from lanosterol: step 2/6. In terms of biological role, reduces the C14=C15 double bond of 4,4-dimethyl-cholesta-8,14,24-trienol to produce 4,4-dimethyl-cholesta-8,24-dienol. This is Delta(14)-sterol reductase (ERG3) from Septoria lycopersici (Tomato leaf spot fungus).